Consider the following 83-residue polypeptide: RNA-binding protein Hfq (83 aa).

The Sm domain maps to 9-68 (DPYLNALRKERIPVSIFLVNGIKLQGQIESFDQFVILLKNTVSQMVYKHAISTVVPARNV).

This sequence belongs to the Hfq family. Homohexamer.

RNA chaperone that binds small regulatory RNA (sRNAs) and mRNAs to facilitate mRNA translational regulation in response to envelope stress, environmental stress and changes in metabolite concentrations. Also binds with high specificity to tRNAs. The polypeptide is RNA-binding protein Hfq (Marinobacter nauticus (strain ATCC 700491 / DSM 11845 / VT8) (Marinobacter aquaeolei)).